A 281-amino-acid polypeptide reads, in one-letter code: CDAN1-interacting nuclease 1 (281 aa).

Thr-114 bears the Phosphothreonine mark.

Its subcellular location is the nucleus. It is found in the cytoplasm. Its function is as follows. Plays a role in erythroid cell differentiation. The chain is CDAN1-interacting nuclease 1 from Mus musculus (Mouse).